A 130-amino-acid chain; its full sequence is Protein NrdI (130 aa).

This sequence belongs to the NrdI family.

In terms of biological role, probably involved in ribonucleotide reductase function. The chain is Protein NrdI from Bartonella bacilliformis (strain ATCC 35685 / KC583 / Herrer 020/F12,63).